A 256-amino-acid polypeptide reads, in one-letter code: YVLIMRLKLKRKIYRADFSEYKGLWSLYNRATDNLYSHLQRALEKYENFGVSAKHKVLQCLVHVVTSQSDNSVRYVYGNIFALVRLGTYVTVWYCYTESAPDFISVDPHYLDIELIIDLFKVRKLFVWIPYEEVISTSILEAYDAVVERTALTDCLDRKLREEELSDKFEFWGKCSDGDHTIDSVEENATIEYASSKEGSACKEGVDSSCKEEGGGCEEEGSGSEEDSDDSDNPRYLAFGVVVLVGVLLYVWYCSR.

Basic and acidic residues predominate over residues 201-214; it reads ACKEGVDSSCKEEG. The tract at residues 201–231 is disordered; it reads ACKEGVDSSCKEEGGGCEEEGSGSEEDSDDS. The segment covering 215–231 has biased composition (acidic residues); the sequence is GGCEEEGSGSEEDSDDS.

Its subcellular location is the mitochondrion. This is an uncharacterized protein from Zea mays (Maize).